Reading from the N-terminus, the 206-residue chain is NADH-quinone oxidoreductase subunit C (206 aa).

The protein belongs to the complex I 30 kDa subunit family. As to quaternary structure, NDH-1 is composed of 14 different subunits. Subunits NuoB, C, D, E, F, and G constitute the peripheral sector of the complex.

The protein resides in the cell inner membrane. The enzyme catalyses a quinone + NADH + 5 H(+)(in) = a quinol + NAD(+) + 4 H(+)(out). Functionally, NDH-1 shuttles electrons from NADH, via FMN and iron-sulfur (Fe-S) centers, to quinones in the respiratory chain. The immediate electron acceptor for the enzyme in this species is believed to be ubiquinone. Couples the redox reaction to proton translocation (for every two electrons transferred, four hydrogen ions are translocated across the cytoplasmic membrane), and thus conserves the redox energy in a proton gradient. The protein is NADH-quinone oxidoreductase subunit C of Bordetella avium (strain 197N).